Reading from the N-terminus, the 144-residue chain is Large ribosomal subunit protein uL15 (144 aa).

A disordered region spans residues 1-54; sequence MRLNTLSPAEGSKKAGKRLGRGIGSGLGKTGGRGHKGQKSRSGGGVRRGFEGGQ. A compositionally biased stretch (gly residues) spans 21–31; sequence RGIGSGLGKTG.

Belongs to the universal ribosomal protein uL15 family. As to quaternary structure, part of the 50S ribosomal subunit.

Binds to the 23S rRNA. The polypeptide is Large ribosomal subunit protein uL15 (Escherichia coli (strain K12 / MC4100 / BW2952)).